We begin with the raw amino-acid sequence, 131 residues long: uncharacterized protein (131 aa).

A disordered region spans residues 60–100 (GRHTLSQVPNKGHEKASAVQLPEKQGTDQSRRGPTSAVTKA). The span at 91–100 (RGPTSAVTKA) shows a compositional bias: polar residues.

This is an uncharacterized protein from Homo sapiens (Human).